The following is a 130-amino-acid chain: Mitochondrial import protein 1 (130 aa).

The interval 1–41 (MSAEEISNPLAESGVTISSDSEQYSAPESASPQSPSSSSPA) is disordered. Positions 15–24 (VTISSDSEQY) are enriched in polar residues. Over residues 25 to 41 (SAPESASPQSPSSSSPA) the composition is skewed to low complexity.

It belongs to the MIM1 family.

Its subcellular location is the mitochondrion outer membrane. In terms of biological role, required for the assembly of the TOM (translocase of outer membrane) receptor complex, which is responsible for the recognition and translocation of cytosolically synthesized mitochondrial preproteins. The sequence is that of Mitochondrial import protein 1 from Neurospora crassa (strain ATCC 24698 / 74-OR23-1A / CBS 708.71 / DSM 1257 / FGSC 987).